The sequence spans 210 residues: Vacuolar protein sorting-associated protein 2 homolog 3 (210 aa).

Residues 1 to 23 form a disordered region; sequence MNIFTKKPNPREVLRESKREMTQ. Residues 9 to 23 show a composition bias toward basic and acidic residues; sequence NPREVLRESKREMTQ. Positions 28-84 form a coiled coil; it reads IEKEIGSLQSEEKKLVLEIKRTAKSGNEGATKILARQLIRLRQQIANLQGSRAQMRG. The segment at 178–200 is disordered; that stretch reads LSSAPKGKIGGKKAEDVGSSGID.

It belongs to the SNF7 family. Component of the endosomal sorting required for transport complex III (ESCRT-III), composed at least of VPS2, VPS20, VPS24 and VPS32.

The protein resides in the endosome. Its function is as follows. Component of the ESCRT-III complex, which is required for multivesicular bodies (MVBs) formation and sorting of endosomal cargo proteins into MVBs. The ESCRT-III complex is probably involved in the concentration of MVB cargo. The chain is Vacuolar protein sorting-associated protein 2 homolog 3 (VPS2.3) from Arabidopsis thaliana (Mouse-ear cress).